The chain runs to 305 residues: tRNA uridine(34) hydroxylase (305 aa).

The Rhodanese domain maps to 125-219 (ADENTVVVDK…YLEEVPREQS (95 aa)). Cys179 (cysteine persulfide intermediate) is an active-site residue.

Belongs to the TrhO family.

The catalysed reaction is uridine(34) in tRNA + AH2 + O2 = 5-hydroxyuridine(34) in tRNA + A + H2O. Catalyzes oxygen-dependent 5-hydroxyuridine (ho5U) modification at position 34 in tRNAs. This is tRNA uridine(34) hydroxylase from Brucella abortus (strain S19).